The sequence spans 458 residues: N-acetylgalactosamine kinase (458 aa).

Alpha-D-galactose is bound by residues arginine 43, glutamate 49, histidine 50, and aspartate 52. Residues glycine 143, serine 145, and serine 146 each contribute to the ATP site. Alpha-D-galactose is bound at residue aspartate 190. Aspartate 190 (proton acceptor) is an active-site residue. ATP is bound by residues asparagine 233 and lysine 234.

Belongs to the GHMP kinase family. GalK subfamily. As to quaternary structure, monomer.

It carries out the reaction N-acetyl-alpha-D-galactosamine + ATP = N-acetyl-alpha-D-galactosamine 1-phosphate + ADP + H(+). Acts on GalNAc. Also acts as a galactokinase when galactose is present at high concentrations. The protein is N-acetylgalactosamine kinase (GALK2) of Pongo abelii (Sumatran orangutan).